Here is a 528-residue protein sequence, read N- to C-terminus: Glucose transporter 1E (528 aa).

The interval 1–22 (MTERRDNVSHAPDAIEGPNDGA) is disordered. The Cytoplasmic portion of the chain corresponds to 1–43 (MTERRDNVSHAPDAIEGPNDGAHAEETSPGFFSFENLGVAQVQ). A helical membrane pass occupies residues 44 to 64 (VVGGTLNGYVIGYVAVYLLLY). Over 65 to 118 (LTATECKFTTEGACGGRKIYGCKWSGTTCKFENPKCSEGSDPSDSCKNEVAYTS) the chain is Extracellular. A helical transmembrane segment spans residues 119 to 139 (VYSGIFACAMIVGSMVGSIIA). Topologically, residues 140–151 (GKCITTFGLKKS) are cytoplasmic. The chain crosses the membrane as a helical span at residues 152–172 (FIIVSITCTIACVVVQVAIEY). Residues 173-175 (NNY) are Extracellular-facing. Residues 176-196 (YALCTGRVLIGLGVGILCSVF) traverse the membrane as a helical segment. The Cytoplasmic segment spans residues 197 to 213 (PMYVNENAHPKLCKMDG). Residues 214–234 (VLFQVFTTLGIMLAAMLGLIL) traverse the membrane as a helical segment. Over 235–250 (DKTGASKEEANMAGRL) the chain is Extracellular. The helical transmembrane segment at 251 to 271 (HVFSAVPLGLSVAMFLVGMFL) threads the bilayer. Topologically, residues 272 to 301 (RESTATFAQDDDGKADGGMDPNEYGWGQML) are cytoplasmic. Residues 302–322 (WPLFMGAVTAGTLQLTGINAV) traverse the membrane as a helical segment. At 323–338 (MNYAPKITENLGMDPS) the chain is on the extracellular side. Residues 339–359 (LGNFLVMAWNFVTSLVAIPLA) traverse the membrane as a helical segment. Residues 360–367 (SRFTMRQM) lie on the Cytoplasmic side of the membrane. A helical membrane pass occupies residues 368 to 388 (FITCSFVASCMCLFLCGIPVF). Over 389-403 (PGVAEEKVKNGVATT) the chain is Extracellular. The helical transmembrane segment at 404–424 (GIALFIAAFEFGVGSCFFVLA) threads the bilayer. Topologically, residues 425-438 (QDLFPPSFRPKGSS) are cytoplasmic. The chain crosses the membrane as a helical span at residues 439–459 (FVVMMQFIFNILINLLYPITT). Over 460-475 (EAISGGATGDQDKGQA) the chain is Extracellular. Residues 476–496 (VVFILFGLIGLICFVLQFFYL) traverse the membrane as a helical segment. Residues 497-528 (YPYDANQDHENDHGTEPVERILSPVDVPTPRN) lie on the Cytoplasmic side of the membrane. Positions 507–528 (NDHGTEPVERILSPVDVPTPRN) are disordered.

It belongs to the major facilitator superfamily. Sugar transporter (TC 2.A.1.1) family.

The protein resides in the membrane. Its function is as follows. Facilitative glucose transporter. The sequence is that of Glucose transporter 1E (THT1E) from Trypanosoma brucei brucei.